Here is a 178-residue protein sequence, read N- to C-terminus: Thymidine kinase (178 aa).

13–20 provides a ligand contact to ATP; it reads GPMFAGKS. The Proton acceptor role is filled by glutamate 85. Residue phenylalanine 115 coordinates substrate. Residues cysteine 140 and cysteine 143 each contribute to the Zn(2+) site. Substrate is bound at residue 159–163; that stretch reads IEIIG. Positions 172 and 175 each coordinate Zn(2+).

Belongs to the thymidine kinase family.

The enzyme catalyses thymidine + ATP = dTMP + ADP + H(+). This Myxoma virus (strain Uriarra) (MYXV) protein is Thymidine kinase (TK).